Reading from the N-terminus, the 218-residue chain is Octanoyltransferase (218 aa).

One can recognise a BPL/LPL catalytic domain in the interval 45–218; that stretch reads AGTADELWLL…TDALQRAIYS (174 aa). Substrate is bound by residues 84–91, 151–153, and 164–166; these read RGGQITYH, ALG, and GLA. Cys-182 (acyl-thioester intermediate) is an active-site residue.

The protein belongs to the LipB family.

The protein resides in the cytoplasm. It carries out the reaction octanoyl-[ACP] + L-lysyl-[protein] = N(6)-octanoyl-L-lysyl-[protein] + holo-[ACP] + H(+). Its pathway is protein modification; protein lipoylation via endogenous pathway; protein N(6)-(lipoyl)lysine from octanoyl-[acyl-carrier-protein]: step 1/2. Its function is as follows. Catalyzes the transfer of endogenously produced octanoic acid from octanoyl-acyl-carrier-protein onto the lipoyl domains of lipoate-dependent enzymes. Lipoyl-ACP can also act as a substrate although octanoyl-ACP is likely to be the physiological substrate. The polypeptide is Octanoyltransferase (Thiobacillus denitrificans (strain ATCC 25259 / T1)).